The sequence spans 117 residues: Putative membrane protein insertion efficiency factor (117 aa).

This sequence belongs to the UPF0161 family.

Its subcellular location is the cell inner membrane. In terms of biological role, could be involved in insertion of integral membrane proteins into the membrane. The sequence is that of Putative membrane protein insertion efficiency factor from Bartonella quintana (strain Toulouse) (Rochalimaea quintana).